The chain runs to 494 residues: UPF0371 protein Sez_1293 (494 aa).

This sequence belongs to the UPF0371 family.

The sequence is that of UPF0371 protein Sez_1293 from Streptococcus equi subsp. zooepidemicus (strain MGCS10565).